Consider the following 111-residue polypeptide: Cytochrome c (111 aa).

Ala1 is subject to N-acetylalanine. The heme c site is built by Cys22, Cys25, and His26. Position 80 is an N6,N6,N6-trimethyllysine (Lys80). Residue Met88 participates in heme c binding. The residue at position 94 (Lys94) is an N6,N6,N6-trimethyllysine.

This sequence belongs to the cytochrome c family. Binds 1 heme c group covalently per subunit.

The protein resides in the mitochondrion intermembrane space. Its function is as follows. Electron carrier protein. The oxidized form of the cytochrome c heme group can accept an electron from the heme group of the cytochrome c1 subunit of cytochrome reductase. Cytochrome c then transfers this electron to the cytochrome oxidase complex, the final protein carrier in the mitochondrial electron-transport chain. The protein is Cytochrome c of Cucurbita maxima (Pumpkin).